A 290-amino-acid chain; its full sequence is ATP synthase gamma chain (290 aa).

It belongs to the ATPase gamma chain family. F-type ATPases have 2 components, CF(1) - the catalytic core - and CF(0) - the membrane proton channel. CF(1) has five subunits: alpha(3), beta(3), gamma(1), delta(1), epsilon(1). CF(0) has three main subunits: a, b and c.

It is found in the cell membrane. In terms of biological role, produces ATP from ADP in the presence of a proton gradient across the membrane. The gamma chain is believed to be important in regulating ATPase activity and the flow of protons through the CF(0) complex. This chain is ATP synthase gamma chain, found in Buchnera aphidicola subsp. Acyrthosiphon pisum (strain 5A).